The chain runs to 492 residues: N-succinylglutamate 5-semialdehyde dehydrogenase (492 aa).

220-225 is an NAD(+) binding site; the sequence is GSAGTG. Residues Glu243 and Cys277 contribute to the active site.

It belongs to the aldehyde dehydrogenase family. AstD subfamily.

The enzyme catalyses N-succinyl-L-glutamate 5-semialdehyde + NAD(+) + H2O = N-succinyl-L-glutamate + NADH + 2 H(+). Its pathway is amino-acid degradation; L-arginine degradation via AST pathway; L-glutamate and succinate from L-arginine: step 4/5. Functionally, catalyzes the NAD-dependent reduction of succinylglutamate semialdehyde into succinylglutamate. The sequence is that of N-succinylglutamate 5-semialdehyde dehydrogenase from Cronobacter sakazakii (strain ATCC BAA-894) (Enterobacter sakazakii).